The chain runs to 238 residues: Dolichyldiphosphatase 1 (238 aa).

The next 4 helical transmembrane spans lie at 33–53 (LAYL…LIIF), 100–120 (PSSH…FLYL), 130–150 (FLDL…AFLV), and 162–182 (WSQV…WFIF).

It belongs to the dolichyldiphosphatase family.

It localises to the endoplasmic reticulum membrane. The catalysed reaction is a di-trans,poly-cis-dolichyl diphosphate + H2O = a di-trans,poly-cis-dolichyl phosphate + phosphate + H(+). The protein operates within protein modification; protein glycosylation. Functionally, required for efficient N-glycosylation. Necessary for maintaining optimal levels of dolichol-linked oligosaccharides. Hydrolyzes dolichyl pyrophosphate at a very high rate and dolichyl monophosphate at a much lower rate. Does not act on phosphatidate. This chain is Dolichyldiphosphatase 1 (DOLPP1), found in Homo sapiens (Human).